A 332-amino-acid polypeptide reads, in one-letter code: uncharacterized protein (332 aa).

The N-terminal stretch at 1–23 is a signal peptide; the sequence is MKRIPSLIIGLLLILATWHSVLA. The chain crosses the membrane as a helical span at residues 231-251; that stretch reads SFFLGMIVTLIILAPVILYLW.

The protein resides in the membrane. This is an uncharacterized protein from Pyrococcus horikoshii (strain ATCC 700860 / DSM 12428 / JCM 9974 / NBRC 100139 / OT-3).